The following is a 484-amino-acid chain: uncharacterized protein (484 aa).

Transmembrane regions (helical) follow at residues 19-39, 78-98, 111-131, 134-154, 165-185, 199-219, 249-269, 289-309, 321-341, 360-380, 398-418, and 440-460; these read LSFG…MIFV, VNWG…WLIV, FFML…FIIL, IFAI…SNYL, FSPF…AGII, IVFL…IILG, TWYW…PFTF, ISVF…TIGL, ISTI…VFVL, LFLF…GVML, FGLI…ITSL, and LGAY…LALL.

The protein localises to the cell membrane. This is an uncharacterized protein from Mesomycoplasma hyopneumoniae (strain 232) (Mycoplasma hyopneumoniae).